Reading from the N-terminus, the 96-residue chain is Small ribosomal subunit protein bS6 (96 aa).

Belongs to the bacterial ribosomal protein bS6 family.

In terms of biological role, binds together with bS18 to 16S ribosomal RNA. The protein is Small ribosomal subunit protein bS6 of Synechococcus sp. (strain JA-2-3B'a(2-13)) (Cyanobacteria bacterium Yellowstone B-Prime).